The primary structure comprises 147 residues: Lysozyme C (147 aa).

The first 18 residues, 1–18 (MKALVILGFLFLSVAVQG), serve as a signal peptide directing secretion. In terms of domain architecture, C-type lysozyme spans 19–147 (KVFERCELAR…VSSYVEGCTL (129 aa)). 4 disulfide bridges follow: Cys-24–Cys-145, Cys-48–Cys-133, Cys-83–Cys-99, and Cys-95–Cys-113. Active-site residues include Glu-53 and Asp-71.

The protein belongs to the glycosyl hydrolase 22 family. Monomer. Stomach-specific.

The enzyme catalyses Hydrolysis of (1-&gt;4)-beta-linkages between N-acetylmuramic acid and N-acetyl-D-glucosamine residues in a peptidoglycan and between N-acetyl-D-glucosamine residues in chitodextrins.. In terms of biological role, lysozymes have primarily a bacteriolytic function; those in tissues and body fluids are associated with the monocyte-macrophage system and enhance the activity of immunoagents. The protein is Lysozyme C (LYZ1) of Bos taurus (Bovine).